Here is a 283-residue protein sequence, read N- to C-terminus: uncharacterized protein (283 aa).

Positions 1 to 21 (MSAYTHPMERELSGLSSRGNS) are disordered. Residues 41-61 (SIFIASLVTFGVLMITLLIAL) traverse the membrane as a helical segment.

The protein belongs to the APS1/VSP family.

It localises to the membrane. This is an uncharacterized protein from Arabidopsis thaliana (Mouse-ear cress).